A 104-amino-acid polypeptide reads, in one-letter code: Photosystem II reaction center Psb28 protein (104 aa).

This sequence belongs to the Psb28 family. In terms of assembly, part of the photosystem II complex.

The protein localises to the cellular thylakoid membrane. This is Photosystem II reaction center Psb28 protein from Synechococcus sp. (strain JA-2-3B'a(2-13)) (Cyanobacteria bacterium Yellowstone B-Prime).